A 31-amino-acid polypeptide reads, in one-letter code: Conotoxin pc6b (31 aa).

Intrachain disulfides connect cysteine 2–cysteine 20, cysteine 9–cysteine 25, and cysteine 19–cysteine 29.

This sequence belongs to the conotoxin O1 superfamily. As to expression, expressed by the venom duct.

It is found in the secreted. The chain is Conotoxin pc6b from Conus pictus (Cone snail).